An 88-amino-acid chain; its full sequence is Apolipoprotein C-I (88 aa).

An N-terminal signal peptide occupies residues 1 to 26 (MRLFLSLPVLVVVLAMVLEGPAPTQA).

The protein belongs to the apolipoprotein C1 family.

Its subcellular location is the secreted. Inhibitor of lipoprotein binding to the low density lipoprotein (LDL) receptor, LDL receptor-related protein, and very low density lipoprotein (VLDL) receptor. Associates with high density lipoproteins (HDL) and the triacylglycerol-rich lipoproteins in the plasma and makes up about 10% of the protein of the VLDL and 2% of that of HDL. Appears to interfere directly with fatty acid uptake and is also the major plasma inhibitor of cholesteryl ester transfer protein (CETP). Binds free fatty acids and reduces their intracellular esterification. Modulates the interaction of APOE with beta-migrating VLDL and inhibits binding of beta-VLDL to the LDL receptor-related protein. The sequence is that of Apolipoprotein C-I (APOC1) from Mirounga angustirostris (Northern elephant seal).